A 452-amino-acid polypeptide reads, in one-letter code: Flavin-containing monooxygenase FMO GS-OX-like 4 (452 aa).

17 to 22 (GAGAAG) lines the FAD pocket. 217–222 (GNSASA) contacts NADP(+).

It belongs to the FMO family. The cofactor is FAD.

Catalyzes the conversion of methylthioalkyl glucosinolates of any chain length into methylsulfinylalkyl glucosinolates. In Arabidopsis thaliana (Mouse-ear cress), this protein is Flavin-containing monooxygenase FMO GS-OX-like 4.